We begin with the raw amino-acid sequence, 356 residues long: Phosphate acyltransferase (356 aa).

The protein belongs to the PlsX family. As to quaternary structure, homodimer. Probably interacts with PlsY.

It localises to the cytoplasm. It catalyses the reaction a fatty acyl-[ACP] + phosphate = an acyl phosphate + holo-[ACP]. Its pathway is lipid metabolism; phospholipid metabolism. Catalyzes the reversible formation of acyl-phosphate (acyl-PO(4)) from acyl-[acyl-carrier-protein] (acyl-ACP). This enzyme utilizes acyl-ACP as fatty acyl donor, but not acyl-CoA. In Bartonella henselae (strain ATCC 49882 / DSM 28221 / CCUG 30454 / Houston 1) (Rochalimaea henselae), this protein is Phosphate acyltransferase.